Reading from the N-terminus, the 600-residue chain is Adenine deaminase (600 aa).

Belongs to the metallo-dependent hydrolases superfamily. Adenine deaminase family. Mn(2+) is required as a cofactor.

It carries out the reaction adenine + H2O + H(+) = hypoxanthine + NH4(+). The protein is Adenine deaminase of Bradyrhizobium sp. (strain BTAi1 / ATCC BAA-1182).